The primary structure comprises 969 residues: RNA polymerase-associated protein RapA (969 aa).

Residues Glu-162 to Asp-339 form the Helicase ATP-binding domain. Residue Asp-175–Thr-182 participates in ATP binding. Residues Asp-285 to His-288 carry the DEAH box motif. The region spanning Arg-492–Gly-663 is the Helicase C-terminal domain.

This sequence belongs to the SNF2/RAD54 helicase family. RapA subfamily. Interacts with the RNAP. Has a higher affinity for the core RNAP than for the holoenzyme. Its ATPase activity is stimulated by binding to RNAP.

Transcription regulator that activates transcription by stimulating RNA polymerase (RNAP) recycling in case of stress conditions such as supercoiled DNA or high salt concentrations. Probably acts by releasing the RNAP, when it is trapped or immobilized on tightly supercoiled DNA. Does not activate transcription on linear DNA. Probably not involved in DNA repair. This chain is RNA polymerase-associated protein RapA, found in Actinobacillus pleuropneumoniae serotype 3 (strain JL03).